The primary structure comprises 212 residues: tRNA (guanine-N(7)-)-methyltransferase (212 aa).

Positions 44, 69, 96, and 118 each coordinate S-adenosyl-L-methionine. Asp118 is an active-site residue. Lys122 contributes to the substrate binding site. The segment at 124 to 129 is interaction with RNA; that stretch reads RHEKRR. Residues Asp154 and 192–195 each bind substrate; that span reads TEYE.

This sequence belongs to the class I-like SAM-binding methyltransferase superfamily. TrmB family.

It catalyses the reaction guanosine(46) in tRNA + S-adenosyl-L-methionine = N(7)-methylguanosine(46) in tRNA + S-adenosyl-L-homocysteine. Its pathway is tRNA modification; N(7)-methylguanine-tRNA biosynthesis. In terms of biological role, catalyzes the formation of N(7)-methylguanine at position 46 (m7G46) in tRNA. The sequence is that of tRNA (guanine-N(7)-)-methyltransferase from Pediococcus pentosaceus (strain ATCC 25745 / CCUG 21536 / LMG 10740 / 183-1w).